The following is a 573-amino-acid chain: Solute carrier family 41 member 2 (573 aa).

The Extracellular portion of the chain corresponds to 1–162 (MTNCKGRSTI…KESSSIMALQ (162 aa)). Residues 163-183 (ILVPFLLAGFGTVTAGMVLDI) form a helical membrane-spanning segment. At 184 to 195 (VQHWDVFKNVTE) the chain is on the cytoplasmic side. The helical transmembrane segment at 196-216 (VFILVPALLGLKGNLEMTLAS) threads the bilayer. Topologically, residues 217–245 (RLSTAVNIGKMDSPIEKWNLIIGNLALKQ) are extracellular. Residues 246-266 (VQATVVGFLAAVAAVILGWIP) form a helical membrane-spanning segment. Residues 267–282 (EGKYSFSHSILLCSSS) lie on the Cytoplasmic side of the membrane. The helical transmembrane segment at 283-303 (VATAFIASLLQGIIMVGVIVG) threads the bilayer. The Extracellular segment spans residues 304-313 (SKKTGINPDN). A helical membrane pass occupies residues 314–334 (VATPIAASFGDLITLAILAWI). Residues 335-347 (SQGLYTCLETYYY) are Cytoplasmic-facing. The chain crosses the membrane as a helical span at residues 348 to 368 (VSPLVGAFFLALTPMGIVIAA). At 369 to 376 (KHPATRTV) the chain is on the extracellular side. The chain crosses the membrane as a helical span at residues 377-397 (LHSGWEPVITAMIISSIGGLI). Over 398–406 (LDTTVSDPN) the chain is Cytoplasmic. The helical transmembrane segment at 407 to 427 (LVGIVVYTPVINGIGGNLVAI) threads the bilayer. At 428–469 (QASRISTYLHLHSIPGELPEEAKGCYYPCRTYYGTGVNNKSA) the chain is on the extracellular side. A helical membrane pass occupies residues 470 to 490 (QVLLLLVIPGHLIFLYTIHLM). The Cytoplasmic portion of the chain corresponds to 491–499 (KSGHTSLTP). A helical membrane pass occupies residues 500-520 (IFIAVYLFAALLQVFTLLWIA). Residues 521–543 (DWMVHHFWKKGKDPDSFSIPYLT) are Extracellular-facing. The chain crosses the membrane as a helical span at residues 544-564 (ALGDLLGTALLAVGFHFLWLI). Topologically, residues 565 to 573 (GDRDGDVGD) are cytoplasmic.

Belongs to the SLC41A transporter family.

The protein localises to the cell membrane. It catalyses the reaction Mg(2+)(in) = Mg(2+)(out). The catalysed reaction is Mn(2+)(in) = Mn(2+)(out). The enzyme catalyses Co(2+)(in) = Co(2+)(out). It carries out the reaction Ni(2+)(in) = Ni(2+)(out). It catalyses the reaction Fe(2+)(in) = Fe(2+)(out). Its function is as follows. Acts as a plasma-membrane magnesium transporter. Can also mediate the transport of other divalent metal cations in an order of Ba(2+) &gt; Ni(2+) &gt; Co(2+) &gt; Fe(2+) &gt; Mn(2+). The polypeptide is Solute carrier family 41 member 2 (SLC41A2) (Gallus gallus (Chicken)).